A 143-amino-acid chain; its full sequence is Probable FAD-linked sulfhydryl oxidase R368 (143 aa).

Positions 10-104 (GWTFSHAVAL…YPEAIEAIEK (95 aa)) constitute an ERV/ALR sulfhydryl oxidase domain. An intrachain disulfide couples C46 to C49. The helical transmembrane segment at 117–137 (FFIILIIIGIIVIIYLMYIVF) threads the bilayer.

Requires FAD as cofactor.

It localises to the membrane. The enzyme catalyses 2 R'C(R)SH + O2 = R'C(R)S-S(R)CR' + H2O2. Functionally, FAD-dependent sulfhydryl oxidase that catalyzes disulfide bond formation. The protein is Probable FAD-linked sulfhydryl oxidase R368 of Acanthamoeba polyphaga mimivirus (APMV).